Consider the following 103-residue polypeptide: Viscotoxin-B (103 aa).

The N-terminal stretch at 1 to 6 (FRNVES) is a signal peptide. Intrachain disulfides connect Cys9–Cys46, Cys10–Cys38, and Cys22–Cys32. Residues 53 to 103 (FYCTLGCQSSKCASITTPPNSEVDAEAVRCKAACSNLCDFGVTTNQEIQDD) constitute a propeptide, acidic domain.

It belongs to the plant thionin (TC 1.C.44) family.

The protein localises to the secreted. Thionins are small plant proteins which are toxic to animal cells. They seem to exert their toxic effect at the level of the cell membrane. Their precise function is not known. This chain is Viscotoxin-B (THI2.2), found in Viscum album (European mistletoe).